We begin with the raw amino-acid sequence, 156 residues long: UPF0523 protein C (156 aa).

Belongs to the UPF0523 family.

The protein is UPF0523 protein C of Dictyostelium discoideum (Social amoeba).